A 399-amino-acid chain; its full sequence is L-methionine gamma-lyase (399 aa).

Residues 59 to 61 (YTR) and 89 to 90 (GI) each bind pyridoxal 5'-phosphate. Tyr-114 is a binding site for substrate. A pyridoxal 5'-phosphate-binding site is contributed by 209–211 (SAT). At Lys-212 the chain carries N6-(pyridoxal phosphate)lysine. Arg-376 contributes to the substrate binding site.

Belongs to the trans-sulfuration enzymes family. L-methionine gamma-lyase subfamily. Homotetramer; dimer of active dimers. Pyridoxal 5'-phosphate serves as cofactor.

It carries out the reaction L-methionine + H2O = methanethiol + 2-oxobutanoate + NH4(+). The catalysed reaction is L-homocysteine + H2O = 2-oxobutanoate + hydrogen sulfide + NH4(+) + H(+). Its function is as follows. Catalyzes the alpha,gamma-elimination of L-methionine to produce methanethiol, 2-oxobutanoate and ammonia; methanethiol (methyl mercaptan) is considered to be one of the main causes of the oral malodor in periodontal disease and may also play a role in the pathogenicity of P.gingivalis in that disease. Is also able to catalyze the alpha,gamma-elimination of L-homocysteine. The sequence is that of L-methionine gamma-lyase from Porphyromonas gingivalis (strain ATCC BAA-308 / W83).